The chain runs to 2364 residues: Cytotoxin-L (2364 aa).

Residues 1–91 (MNLVNKAQLQ…EVLELKNNSL (91 aa)) form a four-helical bundle region. The region spanning 96 to 468 (KNLHFIWIGG…APDVRSTINL (373 aa)) is the GT44 domain. Positions 96–468 (KNLHFIWIGG…APDVRSTINL (373 aa)) are glucosyltransferase region. Residues 101 to 103 (IWI), Asn139, 265 to 270 (LAAASD), and 286 to 288 (DVD) contribute to the UDP-alpha-D-glucose site. Residues Asp288, Glu515, and Ser518 each coordinate Mg(2+). 518–520 (SLW) is a binding site for UDP-alpha-D-glucose. Positions 544 to 799 (GEDDNLDFAQ…KSKYLHELST (256 aa)) are autoprocessing region. Glu545 and Asp546 together coordinate Zn(2+). A Peptidase C80 domain is found at 567 to 774 (LSSMKTRNKE…EESIIKDISS (208 aa)). Tyr577, Lys600, and Lys647 together coordinate 1D-myo-inositol hexakisphosphate. Zn(2+) is bound at residue His653. His653 (for protease activity) is an active-site residue. Cys698 acts as the Nucleophile; for protease activity in catalysis. A Zn(2+)-binding site is contributed by His757. Positions 764, 775, and 792 each coordinate 1D-myo-inositol hexakisphosphate. Residues 800–1500 (LLQEIRNNAN…ESIIRNIYMP (701 aa)) are translocation region. Interaction with host SEMA6A and SEMA6B regions lie at residues 1433 to 1438 (CMKLIE), 1466 to 1471 (DNETKY), 1484 to 1495 (FTAEFSNESIIR), 1504 to 1511 (NLFIYSSK), and 1596 to 1601 (YNNLDP). 20 Cell wall-binding repeats span residues 1813–1832 (EFGL…FGNM), 1833–1852 (VSGL…PKNN), 1854–1873 (ITGF…TKSG), 1876–1895 (SIGE…QGIL), 1926–1945 (FIGK…NYRA), 1946–1965 (AVEW…KTGE), 1967–1986 (LKGL…NGIM), 1987–2006 (QTGF…DGVM), 2007–2026 (QVGY…NGER), 2057–2076 (YNGI…SNTA), 2077–2097 (VVGW…NRAE), 2099–2118 (CIGL…NGIR), 2119–2138 (QLGF…SGKI), 2139–2158 (ELGY…SGLV), 2209–2224 (ETGW…YFDP), 2227–2249 (KKAY…NGIM), 2250–2269 (RTGL…DGKM), 2270–2289 (QFGY…DGKM), 2320–2339 (YTGW…EYIA), and 2340–2359 (ATGS…DTAE). Positions 1835 to 2364 (GLIYINDSLY…PDTAELVVSE (530 aa)) are receptor-binding (CROPS) region.

The protein belongs to the clostridial glucosylating toxin (LCGT) family. Homomultimer; forms an inactive homomultimer at pH 8, which dissociates at pH 4, leading to cytotoxicity. Interacts with host SEMA6A; interaction promotes toxin entry into host cell. Interacts with host SEMA6B; interaction promotes toxin entry into host cell. It depends on Zn(2+) as a cofactor. Requires Mn(2+) as cofactor. Mg(2+) serves as cofactor. Post-translationally, undergoes autocatalytic cleavage to release the N-terminal part (Glucosyltransferase TcsL), which constitutes the active part of the toxin, in the host cytosol. 1D-myo-inositol hexakisphosphate-binding (InsP6) activates the peptidase C80 domain and promotes autoprocessing.

Its subcellular location is the secreted. The protein localises to the host endosome membrane. It localises to the host cytoplasm. The protein resides in the host cytosol. It is found in the host cell membrane. It catalyses the reaction L-threonyl-[protein] + UDP-alpha-D-glucose = 3-O-(alpha-D-glucosyl)-L-threonyl-[protein] + UDP + H(+). Protease activity is activated upon binding to 1D-myo-inositol hexakisphosphate (InsP6), which induces conformational reorganization. In terms of biological role, precursor of a cytotoxin that targets the vascular endothelium, inducing an anti-inflammatory effect and resulting in lethal toxic shock syndrome. TcsL constitutes the main toxin that mediates the pathology of P.sordellii infection, an anaerobic Gram-positive bacterium found in soil and in the gastrointestinal and vaginal tracts of animals and humans; although the majority of carriers are asymptomatic, pathogenic P.sordellii infections arise rapidly and are highly lethal. This form constitutes the precursor of the toxin: it enters into host cells and mediates autoprocessing to release the active toxin (Glucosyltransferase TcsL) into the host cytosol. Targets vascular endothelium by binding to the semaphorin proteins SEMA6A and SEMA6B, and enters host cells via clathrin-mediated endocytosis. Once entered into host cells, acidification in the endosome promotes the membrane insertion of the translocation region and formation of a pore, leading to translocation of the GT44 and peptidase C80 domains across the endosomal membrane. This activates the peptidase C80 domain and autocatalytic processing, releasing the N-terminal part (Glucosyltransferase TcsL), which constitutes the active part of the toxin, in the cytosol. Functionally, active form of the toxin, which is released into the host cytosol following autoprocessing and inactivates small GTPases. Acts by mediating monoglucosylation of small GTPases of the Ras (H-Ras/HRAS, K-Ras/KRAS, N-Ras/NRAS and Ral/RALA) family in host cells at the conserved threonine residue located in the switch I region ('Thr-37/35'), using UDP-alpha-D-glucose as the sugar donor. Also able to catalyze monoglucosylation of some members of the Rho family (Rac1 and Rap2A), but with less efficiency than with Ras proteins. Monoglucosylation of host small GTPases completely prevents the recognition of the downstream effector, blocking the GTPases in their inactive form and leading to apoptosis. Induces an anti-inflammatory effect, mainly by inactivating Ras proteins which results in blockage of the cell cycle and killing of immune cells. The absence or moderate local inflammatory response allows C.sordellii spreading in deep tissues, production of toxin which is released in the general circulation and causes a toxic shock syndrome. This Paraclostridium sordellii (Clostridium sordellii) protein is Cytotoxin-L.